We begin with the raw amino-acid sequence, 497 residues long: Probable cytosol aminopeptidase (497 aa).

2 residues coordinate Mn(2+): Lys263 and Asp268. The active site involves Lys275. 3 residues coordinate Mn(2+): Asp286, Asp345, and Glu347. Residue Arg349 is part of the active site.

The protein belongs to the peptidase M17 family. The cofactor is Mn(2+).

It is found in the cytoplasm. It catalyses the reaction Release of an N-terminal amino acid, Xaa-|-Yaa-, in which Xaa is preferably Leu, but may be other amino acids including Pro although not Arg or Lys, and Yaa may be Pro. Amino acid amides and methyl esters are also readily hydrolyzed, but rates on arylamides are exceedingly low.. The enzyme catalyses Release of an N-terminal amino acid, preferentially leucine, but not glutamic or aspartic acids.. Presumably involved in the processing and regular turnover of intracellular proteins. Catalyzes the removal of unsubstituted N-terminal amino acids from various peptides. The protein is Probable cytosol aminopeptidase of Brucella suis biovar 1 (strain 1330).